The chain runs to 348 residues: Delta(6)-protoilludene synthase 18 (348 aa).

Positions 87, 223, 227, and 231 each coordinate Mg(2+). The DDXXD motif signature appears at 87–91; the sequence is DEYTD. Residues 223-231 carry the NSE/DTE motif motif; the sequence is NDLVSYNRE. (2E,6E)-farnesyl diphosphate is bound by residues arginine 311 and tyrosine 312.

This sequence belongs to the terpene synthase family. Mg(2+) serves as cofactor.

It catalyses the reaction (2E,6E)-farnesyl diphosphate = Delta(6)-protoilludene + diphosphate. In terms of biological role, terpene cyclase that catalyzes the cyclization of farnesyl diphosphate (FPP) to delta(6)-protoilludene. This is Delta(6)-protoilludene synthase 18 from Postia placenta (strain ATCC 44394 / Madison 698-R) (Brown rot fungus).